We begin with the raw amino-acid sequence, 86 residues long: RNA-binding protein Hfq (86 aa).

A Sm domain is found at 12 to 73 (DIFLNQVRKE…ISTISPQKPV (62 aa)).

Belongs to the Hfq family. Homohexamer.

Its function is as follows. RNA chaperone that binds small regulatory RNA (sRNAs) and mRNAs to facilitate mRNA translational regulation in response to envelope stress, environmental stress and changes in metabolite concentrations. Also binds with high specificity to tRNAs. The protein is RNA-binding protein Hfq of Caldanaerobacter subterraneus subsp. tengcongensis (strain DSM 15242 / JCM 11007 / NBRC 100824 / MB4) (Thermoanaerobacter tengcongensis).